The chain runs to 563 residues: uncharacterized protein (563 aa).

Topologically, residues 1–13 are cytoplasmic; the sequence is MASRSCICQVSAG. A helical transmembrane segment spans residues 14 to 34; that stretch reads IIFLIGAALLVAGLVIVLNVF. Over 35 to 528 the chain is Lumenal; that stretch reads PNIVNNQIND…LFTPVSTVNT (494 aa). Asparagine 43, asparagine 112, asparagine 133, asparagine 188, asparagine 265, asparagine 295, asparagine 315, and asparagine 502 each carry an N-linked (GlcNAc...) asparagine glycan. A helical membrane pass occupies residues 529 to 549; that stretch reads ICWIAVGLGAGLIALSIVMVI. Residues 550–563 lie on the Cytoplasmic side of the membrane; that stretch reads VSFCCFRDEHHKTS.

It belongs to the CD36 family.

The protein resides in the membrane. This is an uncharacterized protein from Caenorhabditis elegans.